Consider the following 310-residue polypeptide: tRNA-dihydrouridine(16) synthase (310 aa).

FMN-binding positions include 7 to 9 (PMQ) and glutamine 68. Residue cysteine 98 is the Proton donor of the active site. FMN-binding positions include lysine 139, 200-202 (NGE), and 224-225 (GR).

The protein belongs to the Dus family. DusC subfamily. The cofactor is FMN.

It catalyses the reaction 5,6-dihydrouridine(16) in tRNA + NADP(+) = uridine(16) in tRNA + NADPH + H(+). The catalysed reaction is 5,6-dihydrouridine(16) in tRNA + NAD(+) = uridine(16) in tRNA + NADH + H(+). Functionally, catalyzes the synthesis of 5,6-dihydrouridine (D), a modified base found in the D-loop of most tRNAs, via the reduction of the C5-C6 double bond in target uridines. Specifically modifies U16 in tRNAs. The protein is tRNA-dihydrouridine(16) synthase of Haemophilus influenzae (strain ATCC 51907 / DSM 11121 / KW20 / Rd).